The sequence spans 257 residues: Neurotrophin-3 (257 aa).

Residues 1–18 form the signal peptide; sequence MSILFYVIFLAYLRGIQS. Positions 19–138 are excised as a propeptide; it reads TNMDQRSLPE…VLNRTSRRKR (120 aa). N131 is a glycosylation site (N-linked (GlcNAc...) asparagine). Cystine bridges form between C152–C217, C195–C246, and C205–C248.

The protein belongs to the NGF-beta family. In terms of tissue distribution, in the embryo, the expression peak at E4.5 and decreases at later stages of development.

The protein resides in the secreted. In terms of biological role, seems to promote the survival of visceral and proprioceptive sensory neurons. The sequence is that of Neurotrophin-3 (NTF3) from Gallus gallus (Chicken).